The sequence spans 580 residues: Protein O-linked-mannose beta-1,4-N-acetylglucosaminyltransferase 2 (580 aa).

At 1 to 4 (MHLS) the chain is on the cytoplasmic side. Residues 5-25 (AVFNALLVSVLAAVLWKHVRL) form a helical; Signal-anchor for type II membrane protein membrane-spanning segment. Topologically, residues 26 to 580 (REHAATLEEE…PFADVLVCST (555 aa)) are lumenal. 2 N-linked (GlcNAc...) asparagine glycosylation sites follow: Asn99 and Asn276. One can recognise a Fibronectin type-III domain in the interval 488–580 (ARCQASVQGA…PFADVLVCST (93 aa)).

Belongs to the glycosyltransferase 61 family. Mainly expressed in the central nervous system.

Its subcellular location is the endoplasmic reticulum membrane. It carries out the reaction 3-O-(alpha-D-mannosyl)-L-threonyl-[protein] + UDP-N-acetyl-alpha-D-glucosamine = 3-O-(N-acetyl-beta-D-glucosaminyl-(1-&gt;4)-alpha-D-mannosyl)-L-threonyl-[protein] + UDP + H(+). It functions in the pathway protein modification; protein glycosylation. Functionally, O-linked mannose beta-1,4-N-acetylglucosaminyltransferase that transfers UDP-N-acetyl-D-glucosamine to the 4-position of the mannose to generate N-acetyl-D-glucosamine-beta-1,4-O-D-mannosylprotein. Involved in the biosynthesis of the phosphorylated O-mannosyl trisaccharide (N-acetylgalactosamine-beta-3-N-acetylglucosamine-beta-4-(phosphate-6-)mannose), a carbohydrate structure present in alpha-dystroglycan (DAG1), which is required for binding laminin G-like domain-containing extracellular proteins with high affinity. The chain is Protein O-linked-mannose beta-1,4-N-acetylglucosaminyltransferase 2 (Pomgnt2) from Mus musculus (Mouse).